A 288-amino-acid polypeptide reads, in one-letter code: Type II iodothyronine deiodinase (288 aa).

Residues Met1–Asn5 lie on the Lumenal side of the membrane. Residues Leu6 to Tyr26 form a helical; Signal-anchor for type III membrane protein membrane-spanning segment. At Asp27–Arg288 the chain is on the cytoplasmic side. Residues Ser99 to Thr130 are disordered. Residue Sec160 is part of the active site. Position 160 (Sec160) is a non-standard amino acid, selenocysteine.

This sequence belongs to the iodothyronine deiodinase family. In terms of assembly, predominantly monomer. Can form homodimers but homodimerization is not essential for enzyme activity. As to expression, expressed in intestine, liver, kidney and brain of immediately premetamorphic larvae, of larvae in all stages of metamorphosis and of parasitic feeding juveniles. In immediately premetamorphic larvae, levels are significantly higher in intestine and liver than in kidney and brain.

The protein resides in the endoplasmic reticulum membrane. It carries out the reaction 3,3',5-triiodo-L-thyronine + iodide + A + H(+) = L-thyroxine + AH2. It catalyses the reaction 3,3'-diiodo-L-thyronine + iodide + A + H(+) = 3,3',5'-triiodo-L-thyronine + AH2. The enzyme catalyses 3'-iodo-L-thyronine + iodide + A + H(+) = 3',5'-diiodo-L-thyronine + AH2. The catalysed reaction is 3,3'-diiodothyronamine + iodide + A + H(+) = 3,3',5'-triiodothyronamine + AH2. It carries out the reaction 3'-iodothyronamine + iodide + A + H(+) = 3',5'-diiodothyronamine + AH2. Functionally, plays a crucial role in the metabolism of thyroid hormones (TH) and has specific roles in TH activation and inactivation by deiodination. Catalyzes the deiodination of L-thyroxine (T4) to 3,5,3'-triiodothyronine (T3), 3,3',5'-triiodothyronine (rT3) to 3,3'-diiodothyronine (3,3'-T2) and 3',5'-diiodothyronine (3',5'-T2) to 3'-monoiodothyronine (3'-T1) via outer-ring deiodination (ORD). Catalyzes the phenolic ring deiodinations of 3,3',5'-triiodothyronamine and 3',5'- diiodothyronamine. The sequence is that of Type II iodothyronine deiodinase from Petromyzon marinus (Sea lamprey).